The chain runs to 275 residues: MTLQQQIIKALGAKPQINAEEEIRRSIDFLKSYLQTYPFIKSLVLGISGGQDSTLAGKLCQMAINELRQETGNESLQFIAVRLPYGVQADEQDCQDAIAFIQPDRVLTVNIKGAVLASEQALREAGIELSDFVRGNEKARERMKAQYSIAGMTSGVVVGTDHAAEAITGFFTKYGDGGTDINPLYRLNKRQGKQLLAALGCPEHLYKKAPTADLEDDRPSLPDEVVLGVTYDNIDDYLEGKNVPEQVARTIENWYLKTEHKRRPPITVFDDFWKK.

46–53 (GISGGQDS) serves as a coordination point for ATP. D52 contributes to the Mg(2+) binding site. Residue R140 participates in deamido-NAD(+) binding. An ATP-binding site is contributed by T160. E165 provides a ligand contact to Mg(2+). 2 residues coordinate deamido-NAD(+): K173 and D180. Residues K189 and T211 each coordinate ATP. Residue 260-261 (HK) participates in deamido-NAD(+) binding.

Belongs to the NAD synthetase family. In terms of assembly, homodimer.

The enzyme catalyses deamido-NAD(+) + NH4(+) + ATP = AMP + diphosphate + NAD(+) + H(+). It functions in the pathway cofactor biosynthesis; NAD(+) biosynthesis; NAD(+) from deamido-NAD(+) (ammonia route): step 1/1. Its function is as follows. Catalyzes the ATP-dependent amidation of deamido-NAD to form NAD. Uses ammonia as a nitrogen source. This Shigella dysenteriae serotype 1 (strain Sd197) protein is NH(3)-dependent NAD(+) synthetase.